We begin with the raw amino-acid sequence, 184 residues long: Peptidyl-tRNA hydrolase (184 aa).

Tyr-14 lines the tRNA pocket. Residue His-19 is the Proton acceptor of the active site. TRNA-binding residues include Phe-64, Asn-66, and Asn-112.

This sequence belongs to the PTH family. In terms of assembly, monomer.

It is found in the cytoplasm. The catalysed reaction is an N-acyl-L-alpha-aminoacyl-tRNA + H2O = an N-acyl-L-amino acid + a tRNA + H(+). Its function is as follows. Hydrolyzes ribosome-free peptidyl-tRNAs (with 1 or more amino acids incorporated), which drop off the ribosome during protein synthesis, or as a result of ribosome stalling. In terms of biological role, catalyzes the release of premature peptidyl moieties from peptidyl-tRNA molecules trapped in stalled 50S ribosomal subunits, and thus maintains levels of free tRNAs and 50S ribosomes. This is Peptidyl-tRNA hydrolase from Listeria innocua serovar 6a (strain ATCC BAA-680 / CLIP 11262).